We begin with the raw amino-acid sequence, 79 residues long: Acyl carrier protein (79 aa).

Positions 2 to 77 (SDVAERVKKI…DAVNFLEKAT (76 aa)) constitute a Carrier domain. Residue S37 is modified to O-(pantetheine 4'-phosphoryl)serine.

The protein belongs to the acyl carrier protein (ACP) family. In terms of processing, 4'-phosphopantetheine is transferred from CoA to a specific serine of apo-ACP by AcpS. This modification is essential for activity because fatty acids are bound in thioester linkage to the sulfhydryl of the prosthetic group.

Its subcellular location is the cytoplasm. It functions in the pathway lipid metabolism; fatty acid biosynthesis. Functionally, carrier of the growing fatty acid chain in fatty acid biosynthesis. This Methylocella silvestris (strain DSM 15510 / CIP 108128 / LMG 27833 / NCIMB 13906 / BL2) protein is Acyl carrier protein.